The following is a 1250-amino-acid chain: Nucleoporin pom152 (1250 aa).

Residues 1–79 (MVTRVASSER…IYLRLLPKFR (79 aa)) form a pore side region. Residues 80–100 (IPWLSFQPAATLLQIAIFAAI) traverse the membrane as a helical segment. Positions 101-1250 (NLLLSSLSSL…PQDSTSSSNI (1150 aa)) are cisternal side.

Component of the nuclear pore complex (NPC). NPC constitutes the exclusive means of nucleocytoplasmic transport. NPCs allow the passive diffusion of ions and small molecules and the active, nuclear transport receptor-mediated bidirectional transport of macromolecules such as proteins, RNAs, ribonucleoparticles (RNPs), and ribosomal subunits across the nuclear envelope.

It localises to the nucleus. The protein resides in the nuclear pore complex. It is found in the nucleus membrane. In terms of biological role, functions as a component of the nuclear pore complex (NPC). NPC components, collectively referred to as nucleoporins (NUPs), can play the role of both NPC structural components and of docking or interaction partners for transiently associated nuclear transport factors. This is Nucleoporin pom152 (pom152) from Schizosaccharomyces pombe (strain 972 / ATCC 24843) (Fission yeast).